Consider the following 442-residue polypeptide: Matrix remodeling-associated protein 8 (442 aa).

An N-terminal signal peptide occupies residues 1–19; that stretch reads MELLSRVLLWKLLLLQSSA. The Extracellular segment spans residues 20–340; the sequence is VLSSGPSGTA…PEDHTHFFQQ (321 aa). Ig-like V-type domains follow at residues 25–156 and 159–291; these read PSGT…LEVT and PLLS…LQVT. 2 cysteine pairs are disulfide-bonded: cysteine 53/cysteine 136 and cysteine 185/cysteine 271. N-linked (GlcNAc...) asparagine glycosylation occurs at asparagine 118. An RGD 1 motif is present at residues 128 to 130; the sequence is RGD. Residue serine 227 is modified to Phosphoserine. The RGD 2 motif lies at 251-253; that stretch reads RGD. The interval 296–319 is disordered; it reads EPPARASPGNGSGHSSAPSPDPTL. Asparagine 305 is a glycosylation site (N-linked (GlcNAc...) asparagine). A helical membrane pass occupies residues 341–361; that stretch reads LGYVLATLLLFILLLITVVLA. The Cytoplasmic segment spans residues 362–442; sequence TRYRHSGGCK…DKEFRKEYCK (81 aa).

As to quaternary structure, homodimer in cis. Does not appear to form trans-homodimers. Interacts with ITGB3; the interaction inhibits ITGAV:ITGB3 heterodimer formation. In terms of tissue distribution, widely expressed (at protein level). Highly expressed in brain where it localizes to the glia limitans, which is formed by the endfeet of astrocytes surrounding capillaries, and beneath the pia mater (at protein level). In lung, detected in epithelial cells of the bronchus (at protein level). Expressed in intercalated disks in the heart (at protein level). Detected in pancreatic alpha-cells in the islet of Langerhans (at protein level). In kidney, found in the brush border of the proximal convoluted tubule (at protein level). Expressed in the epithelium of the small intestine (at protein level). Weakly expressed in liver (at protein level). Detected in myeloid cells.

The protein localises to the cell membrane. It is found in the cell junction. The protein resides in the tight junction. It localises to the cytoplasm. Its subcellular location is the cell projection. The protein localises to the cilium membrane. It is found in the nucleus. In terms of biological role, transmembrane protein which can modulate activity of various signaling pathways, probably via binding to integrin ITGAV:ITGB3. Mediates heterophilic cell-cell interactions in vitro. Inhibits osteoclastogenesis downstream of TNFSF11/RANKL and CSF1, where it may function by attenuating signaling via integrin ITGB3 and MAP kinase p38. Plays a role in cartilage formation where it promotes proliferation and maturation of growth plate chondrocytes. Stimulates formation of primary cilia in chondrocytes. Enhances expression of genes involved in the hedgehog signaling pathway in chondrocytes, including the hedgehog signaling molecule IHH; may also promote signaling via the PTHLH/PTHrP pathway. Plays a role in angiogenesis where it suppresses migration of endothelial cells and also promotes their apoptosis. Inhibits VEGF-induced activation of AKT and p38 MAP kinase in endothelial cells. Also inhibits VTN (vitronectin)-mediated integrin ITGAV:ITGB3 signaling and activation of PTK2/FAK. May play a role in the maturation and maintenance of the blood-brain barrier. This chain is Matrix remodeling-associated protein 8, found in Mus musculus (Mouse).